The primary structure comprises 249 residues: 3-deoxy-D-manno-octulosonic acid kinase (249 aa).

The active site involves Asp175.

This sequence belongs to the protein kinase superfamily. KdkA/RfaP family.

It is found in the cell inner membrane. The enzyme catalyses an alpha-Kdo-(2-&gt;6)-lipid IVA + ATP = a 4-O-phospho-alpha-Kdo-(2-&gt;6)-lipid IVA + ADP + H(+). Its pathway is bacterial outer membrane biogenesis; LPS core biosynthesis. Catalyzes the ATP-dependent phosphorylation of the 3-deoxy-D-manno-octulosonic acid (Kdo) residue in Kdo-lipid IV(A) at the 4-OH position. This is 3-deoxy-D-manno-octulosonic acid kinase from Xylella fastidiosa (strain M12).